We begin with the raw amino-acid sequence, 125 residues long: Large ribosomal subunit protein bL12 (125 aa).

It belongs to the bacterial ribosomal protein bL12 family. Homodimer. Part of the ribosomal stalk of the 50S ribosomal subunit. Forms a multimeric L10(L12)X complex, where L10 forms an elongated spine to which 2 to 4 L12 dimers bind in a sequential fashion. Binds GTP-bound translation factors.

Forms part of the ribosomal stalk which helps the ribosome interact with GTP-bound translation factors. Is thus essential for accurate translation. The polypeptide is Large ribosomal subunit protein bL12 (Azorhizobium caulinodans (strain ATCC 43989 / DSM 5975 / JCM 20966 / LMG 6465 / NBRC 14845 / NCIMB 13405 / ORS 571)).